The chain runs to 322 residues: CMP-sialic acid transporter 1 (322 aa).

Over 1 to 2 (MQ) the chain is Cytoplasmic. Residues 3 to 23 (WYLVAALLTVLTSSQGILTTL) form a helical membrane-spanning segment. Over 24–33 (SQSNGKYKYD) the chain is Lumenal. Residues 34 to 54 (YATIPFLAELFKLSFSSFFLW) traverse the membrane as a helical segment. Residues 55–75 (KECQSSSPPRMTKEWRSIRLY) lie on the Cytoplasmic side of the membrane. The helical transmembrane segment at 76–96 (LVPSVIYLIHNNVQFATLTYV) threads the bilayer. Residues 97-100 (DPST) lie on the Lumenal side of the membrane. Residues 101–120 (YQIMGNLKIVTTGILFRLVL) form a helical membrane-spanning segment. Residues 121 to 126 (KRKLSN) are Cytoplasmic-facing. Residues 127 to 144 (LQWMAVVLLAVGTTTSQV) traverse the membrane as a helical segment. Over 145–157 (KGCGDAPCDSLFS) the chain is Lumenal. A helical membrane pass occupies residues 158–178 (APFQGYMLGILSACLSALAGV). The Cytoplasmic segment spans residues 179–198 (YTEYLMKKNNDSLYWQNVQL). Residues 199–219 (YTFGVIFNMGWLIYGDFKAGF) traverse the membrane as a helical segment. The Lumenal segment spans residues 220-233 (ERGPWWQRLFNGYS). A helical transmembrane segment spans residues 234 to 254 (ITTWMVVFNLGSTGLLVSWLM). Over 255–262 (KYSDNIVK) the chain is Cytoplasmic. A helical transmembrane segment spans residues 263–283 (VYSTSMAMLLTMVLSVYLFNV). The Lumenal segment spans residues 284–286 (RAT).

It belongs to the nucleotide-sugar transporter family. CMP-Sialate:CMP antiporter (TC 2.A.7.12) subfamily. Expressed in roots, leaves and stalks.

The protein localises to the golgi apparatus membrane. Its function is as follows. Sugar transporter involved in the transport of CMP-sialic acid from the cytoplasm into the Golgi. May transport important nucleotide sugars such as CMP-Kdo (2-keto-3-deoxy-D-manno-octulosonic acid) in physiological conditions. The chain is CMP-sialic acid transporter 1 from Oryza sativa subsp. japonica (Rice).